Consider the following 441-residue polypeptide: Transcription factor bHLH90 (441 aa).

The bHLH domain maps to 260–309; sequence NFKSKNLHSERKRRERINQAMYGLRAVVPKITKLNKIGIFSDAVDYINEL.

In terms of assembly, homodimer. In terms of tissue distribution, expressed constitutively in roots, leaves, stems, and flowers.

The protein localises to the nucleus. The chain is Transcription factor bHLH90 (BHLH90) from Arabidopsis thaliana (Mouse-ear cress).